The following is a 446-amino-acid chain: GRAM domain-containing protein 2B (446 aa).

At methionine 1 the chain carries N-acetylmethionine. Positions 1–120 (MVKKRLPSND…RKKSSSSSQY (120 aa)) are disordered. Residues 29–43 (SRSSTDSPSSVFFSS) show a composition bias toward low complexity. The segment covering 95–113 (DKNDCKTESKNDPKTERKK) has biased composition (basic and acidic residues). Positions 124 to 191 (MHFHKLFLSV…FSVTLIKKTK (68 aa)) constitute a GRAM domain. Positions 234–247 (TSVGNSPNPSSAEN) are enriched in polar residues. The interval 234 to 253 (TSVGNSPNPSSAENSFRADR) is disordered. Phosphoserine occurs at positions 239, 256, and 266. The segment at 276 to 298 (RQDMEGYSSSGSQTPESENSRDF) is disordered. A compositionally biased stretch (polar residues) spans 282-292 (YSSSGSQTPES).

This chain is GRAM domain-containing protein 2B (GRAMD2B), found in Pongo abelii (Sumatran orangutan).